The sequence spans 213 residues: Protein HSH49 (213 aa).

RRM domains are found at residues 9 to 88 and 108 to 185; these read NTVY…QVTN and AKLF…YAFK.

As to quaternary structure, interacts with RDS3.

The protein resides in the nucleus. In terms of biological role, possible SF3b-like factor. In Saccharomyces cerevisiae (strain ATCC 204508 / S288c) (Baker's yeast), this protein is Protein HSH49 (HSH49).